A 395-amino-acid chain; its full sequence is Protein PIN-LIKES 7 (395 aa).

At 1 to 8 the chain is on the lumenal side; it reads MGFLELLE. Residues 9-29 form a helical membrane-spanning segment; it reads VASMPIVQVLLISVLGAFLAT. Residues 30–45 lie on the Cytoplasmic side of the membrane; that stretch reads DYCSLLSADTRRSVNK. Residues 46–66 form a helical membrane-spanning segment; it reads LVFVVFTPCIMFANLAETVTL. At 67–73 the chain is on the lumenal side; sequence QDIISWW. A helical membrane pass occupies residues 74 to 94; sequence FMPINVGITFLVGGILGWLVV. The Cytoplasmic segment spans residues 95-106; sequence KLLNPKPQLHGL. A helical transmembrane segment spans residues 107–127; that stretch reads IIATCASGNMGNLMLILVPAI. Residues 128-142 lie on the Lumenal side of the membrane; that stretch reads CDEEGSPFGNRSVCR. A helical membrane pass occupies residues 143-163; the sequence is SIGLSYASFSMALGGFYIWTY. The Cytoplasmic segment spans residues 164-232; that stretch reads SYQLVRSSAT…KDLLHQILEE (69 aa). The chain crosses the membrane as a helical span at residues 233–253; that stretch reads LFAPPTIGAILGFVFGATNWL. Topologically, residues 254 to 272 are lumenal; the sequence is RNLIIGENAPLRVIQDSVK. A helical transmembrane segment spans residues 273–293; it reads LLGEGTIPCITLILGGNLIQG. The Cytoplasmic portion of the chain corresponds to 294–302; that stretch reads LRSSAVKKS. A helical transmembrane segment spans residues 303-323; sequence VIVGVIIVRYILLPVVGVGVV. The Lumenal portion of the chain corresponds to 324 to 340; the sequence is QLAGNLGYLPPDPLFRY. The chain crosses the membrane as a helical span at residues 341-361; that stretch reads VLMLQFALPPAMNISTMAQLF. Residues 362-369 are Cytoplasmic-facing; the sequence is DVAQDECS. A helical transmembrane segment spans residues 370–390; the sequence is VIFLWTYLVASLALTVWSTIF. Residues 391–395 lie on the Lumenal side of the membrane; it reads LSILS.

It belongs to the auxin efflux carrier (TC 2.A.69.2) family. Expressed in seedlings, rosette and cauline leaves, stems and flowers.

It localises to the endoplasmic reticulum membrane. Involved in cellular auxin homeostasis by regulating auxin metabolism. Regulates intracellular auxin accumulation at the endoplasmic reticulum and thus auxin availability for nuclear auxin signaling. This Arabidopsis thaliana (Mouse-ear cress) protein is Protein PIN-LIKES 7.